The primary structure comprises 104 residues: Nucleoid-associated protein PEPE_1483 (104 aa).

Residues 1-35 form a disordered region; the sequence is MRGGMGNMQSMMRQMQKMQKKVTEEQEKLNQTEFT. Low complexity predominate over residues 8-17; that stretch reads MQSMMRQMQK. A compositionally biased stretch (basic and acidic residues) spans 21-30; sequence KVTEEQEKLN.

It belongs to the YbaB/EbfC family. Homodimer.

Its subcellular location is the cytoplasm. It is found in the nucleoid. Functionally, binds to DNA and alters its conformation. May be involved in regulation of gene expression, nucleoid organization and DNA protection. The sequence is that of Nucleoid-associated protein PEPE_1483 from Pediococcus pentosaceus (strain ATCC 25745 / CCUG 21536 / LMG 10740 / 183-1w).